We begin with the raw amino-acid sequence, 482 residues long: tRNA sulfurtransferase (482 aa).

One can recognise a THUMP domain in the interval 61–165 (EQAIEALACI…GEELFIVSAI (105 aa)). ATP-binding positions include 183-184 (LI), K265, G287, and Q296. C344 and C456 are oxidised to a cystine. The region spanning 404–482 (SGDNEVILDI…GFANVKVYRP (79 aa)) is the Rhodanese domain. C456 (cysteine persulfide intermediate) is an active-site residue.

Belongs to the ThiI family.

It is found in the cytoplasm. It catalyses the reaction [ThiI sulfur-carrier protein]-S-sulfanyl-L-cysteine + a uridine in tRNA + 2 reduced [2Fe-2S]-[ferredoxin] + ATP + H(+) = [ThiI sulfur-carrier protein]-L-cysteine + a 4-thiouridine in tRNA + 2 oxidized [2Fe-2S]-[ferredoxin] + AMP + diphosphate. The enzyme catalyses [ThiS sulfur-carrier protein]-C-terminal Gly-Gly-AMP + S-sulfanyl-L-cysteinyl-[cysteine desulfurase] + AH2 = [ThiS sulfur-carrier protein]-C-terminal-Gly-aminoethanethioate + L-cysteinyl-[cysteine desulfurase] + A + AMP + 2 H(+). The protein operates within cofactor biosynthesis; thiamine diphosphate biosynthesis. In terms of biological role, catalyzes the ATP-dependent transfer of a sulfur to tRNA to produce 4-thiouridine in position 8 of tRNAs, which functions as a near-UV photosensor. Also catalyzes the transfer of sulfur to the sulfur carrier protein ThiS, forming ThiS-thiocarboxylate. This is a step in the synthesis of thiazole, in the thiamine biosynthesis pathway. The sulfur is donated as persulfide by IscS. This chain is tRNA sulfurtransferase, found in Aeromonas hydrophila subsp. hydrophila (strain ATCC 7966 / DSM 30187 / BCRC 13018 / CCUG 14551 / JCM 1027 / KCTC 2358 / NCIMB 9240 / NCTC 8049).